The primary structure comprises 219 residues: 2-hydroxy-3-keto-5-methylthiopentenyl-1-phosphate phosphatase (219 aa).

This sequence belongs to the HAD-like hydrolase superfamily. MtnX family.

It carries out the reaction 2-hydroxy-5-methylsulfanyl-3-oxopent-1-enyl phosphate + H2O = 1,2-dihydroxy-5-(methylsulfanyl)pent-1-en-3-one + phosphate. The protein operates within amino-acid biosynthesis; L-methionine biosynthesis via salvage pathway; L-methionine from S-methyl-5-thio-alpha-D-ribose 1-phosphate: step 4/6. Functionally, dephosphorylates 2-hydroxy-3-keto-5-methylthiopentenyl-1-phosphate (HK-MTPenyl-1-P) yielding 1,2-dihydroxy-3-keto-5-methylthiopentene (DHK-MTPene). The chain is 2-hydroxy-3-keto-5-methylthiopentenyl-1-phosphate phosphatase from Bacillus cereus (strain B4264).